A 913-amino-acid chain; its full sequence is MFAPLLKKLFGSKNEREVKRMLKTVQIVNAFEEQMVALSDEQLRAKTEEFKARIAKGETLDQLLPEAFAVAREAGKRVMGMRHFDVQLIGGMTLHEGQIAEMRTGEGKTLVGTLAVYLNALSGKGVHVVTVNDYLARRDANWMRPLYEFLGLTVGIVTPFQPPEEKRAAYAADITYGTNNEYGFDYLRDNMAFSMDDKFQRELNFAVIDEVDSILIDEARTPLIISGQAEDSSKLYTEINRLIPKLEQHIEEVEGEVTKAGHFTVDEKTRQVELNEAGHQFIEEMLTEVGLLAEGESLYSAHNLGLLTHVYAGLRAHKLFNRNVEYIVSDGQVLLVDEHTGRTMPGRRLSEGLHQAIEAKEGLNIQAESQTLASTTFQNYFRLYNKLSGMTGTADTEAFEFHQIYNLAVMVIPPNKPLARKDFNDLVYLTAEEKYAAIVTDIKACIAENRPVLVGTATIETSEHMSNLLNKEGIEHKVLNAKFHEKEAEIIAQAGRPGALTIATNMAGRGTDILLGGNWEVEVANLEDPTPEQIAQIKADWQKRHQQVIEAGGLHVIASERHESRRIDNQLRGRAGRQGDTGSSRFYLSLEDSLMRIFASDRVKNFMKALGMQSGEAIEHRMVTNAIEKAQRKVEGRNFDIRKQLLEFDDVANEQRKVIYHMRNTLLAAENIGETIADFREEVLNNLISQHIPPQSLPEQWNVAGLESALNTDFAVQLPIQQWLDEDDKLHEDSLREKIMAQLLVAYNEKEDQASAEALRSFEKQILLRVLDDLWKDHLSTMDHLRHGIHLRGYAQKNPKQEYKRESFTLFQELLDSIKRDTIRVLSHVQVRREDPEEEEARLRQDAEELASRMQFEHAPAPGIEQPLLDEEGGGAPVAVASEPVRNDQKLGRNELCWCGSGKKFKHCHGQIN.

ATP-binding positions include Gln87, Gly105–Thr109, and Asp512. Zn(2+)-binding residues include Cys897, Cys899, Cys908, and His909.

It belongs to the SecA family. Monomer and homodimer. Part of the essential Sec protein translocation apparatus which comprises SecA, SecYEG and auxiliary proteins SecDF-YajC and YidC. It depends on Zn(2+) as a cofactor.

The protein localises to the cell inner membrane. Its subcellular location is the cytoplasm. The enzyme catalyses ATP + H2O + cellular proteinSide 1 = ADP + phosphate + cellular proteinSide 2.. In terms of biological role, part of the Sec protein translocase complex. Interacts with the SecYEG preprotein conducting channel. Has a central role in coupling the hydrolysis of ATP to the transfer of proteins into and across the cell membrane, serving both as a receptor for the preprotein-SecB complex and as an ATP-driven molecular motor driving the stepwise translocation of polypeptide chains across the membrane. This is Protein translocase subunit SecA from Pseudomonas syringae pv. syringae (strain B728a).